An 875-amino-acid chain; its full sequence is Kelch-like protein 29 (875 aa).

Over residues 113 to 126 (IRWGQTPVNQSTPW) the composition is skewed to polar residues. Disordered regions lie at residues 113-145 (IRWG…PGTG) and 240-291 (GVGQ…DSAH). Residues 131 to 140 (PPSKQMRESD) show a composition bias toward basic and acidic residues. The segment covering 270 to 280 (PSAALPSSVPA) has biased composition (low complexity). The BTB domain occupies 329–401 (TDLKIVVEGR…VYTGSLVIDS (73 aa)). Kelch repeat units lie at residues 585–635 (VIVL…VSAG), 637–683 (NIYL…VYDG), 684–730 (KIYT…VCGG), 732–778 (IYVF…TLNG), 779–821 (FVFI…VLDG), and 822–870 (KIYA…VIKK).

The protein is Kelch-like protein 29 (Klhl29) of Mus musculus (Mouse).